The sequence spans 598 residues: Polypeptide N-acetylgalactosaminyltransferase 17 (598 aa).

At 1-6 (MASLRR) the chain is on the cytoplasmic side. The helical; Signal-anchor for type II membrane protein transmembrane segment at 7–27 (VKVLLVLNLIAVAGFVIFLAK) threads the bilayer. Over 28 to 598 (CRPIAVRSGD…QRWAIKNPIK (571 aa)) the chain is Lumenal. N-linked (GlcNAc...) asparagine glycosylation is present at Asn50. Intrachain disulfides connect Cys142-Cys373 and Cys364-Cys443. The tract at residues 151–262 (LPQISIIFIF…AGWAEPVLSR (112 aa)) is catalytic subdomain A. Substrate contacts are provided by Asp192 and Arg223. Positions 246, 248, and 378 each coordinate Mn(2+). Residues 319–381 (PIRTPAMIGC…PCSRVAHIER (63 aa)) form a catalytic subdomain B region. Positions 381 and 386 each coordinate substrate. Asn461 and Asn486 each carry an N-linked (GlcNAc...) asparagine glycan. One can recognise a Ricin B-type lectin domain in the interval 465–594 (AYGELRNNKA…SCTGQRWAIK (130 aa)). 3 disulfide bridges follow: Cys478/Cys494, Cys526/Cys541, and Cys568/Cys586.

This sequence belongs to the glycosyltransferase 2 family. GalNAc-T subfamily. It depends on Mn(2+) as a cofactor.

Its subcellular location is the golgi apparatus membrane. The catalysed reaction is L-seryl-[protein] + UDP-N-acetyl-alpha-D-galactosamine = a 3-O-[N-acetyl-alpha-D-galactosaminyl]-L-seryl-[protein] + UDP + H(+). It carries out the reaction L-threonyl-[protein] + UDP-N-acetyl-alpha-D-galactosamine = a 3-O-[N-acetyl-alpha-D-galactosaminyl]-L-threonyl-[protein] + UDP + H(+). The protein operates within protein modification; protein glycosylation. Its function is as follows. May catalyze the initial reaction in O-linked oligosaccharide biosynthesis, the transfer of an N-acetyl-D-galactosamine residue to a serine or threonine residue on the protein receptor. The sequence is that of Polypeptide N-acetylgalactosaminyltransferase 17 from Mus musculus (Mouse).